We begin with the raw amino-acid sequence, 184 residues long: Guanylate kinase (184 aa).

The region spanning 5–183 is the Guanylate kinase-like domain; the sequence is KKLIILTGPS…TAKRIIKLIQ (179 aa). Residue 12-19 participates in ATP binding; sequence GPSGVGKG.

The protein belongs to the guanylate kinase family.

It is found in the cytoplasm. The catalysed reaction is GMP + ATP = GDP + ADP. In terms of biological role, essential for recycling GMP and indirectly, cGMP. The sequence is that of Guanylate kinase from Prochlorococcus marinus (strain MIT 9312).